A 274-amino-acid polypeptide reads, in one-letter code: Large ribosomal subunit protein uL2cz/uL2cy (274 aa).

Disordered regions lie at residues 1-21 (MAIHLYKTSTPSTRNGAVDSQ) and 224-274 (NPVD…RRSK).

This sequence belongs to the universal ribosomal protein uL2 family. Part of the 50S ribosomal subunit.

It is found in the plastid. The protein resides in the chloroplast. This is Large ribosomal subunit protein uL2cz/uL2cy (rpl2-A) from Populus trichocarpa (Western balsam poplar).